The primary structure comprises 647 residues: DNA ligase (647 aa).

NAD(+)-binding positions include 30-34 (DEEYD), 79-80 (SM), and glutamate 106. Residue lysine 108 is the N6-AMP-lysine intermediate of the active site. 3 residues coordinate NAD(+): arginine 129, glutamate 163, and lysine 301. Positions 395, 398, 411, and 416 each coordinate Zn(2+). In terms of domain architecture, BRCT spans 569-647 (SISNALSGKT…SEYERLKLEV (79 aa)).

It belongs to the NAD-dependent DNA ligase family. LigA subfamily. Mg(2+) serves as cofactor. Mn(2+) is required as a cofactor.

It carries out the reaction NAD(+) + (deoxyribonucleotide)n-3'-hydroxyl + 5'-phospho-(deoxyribonucleotide)m = (deoxyribonucleotide)n+m + AMP + beta-nicotinamide D-nucleotide.. Its function is as follows. DNA ligase that catalyzes the formation of phosphodiester linkages between 5'-phosphoryl and 3'-hydroxyl groups in double-stranded DNA using NAD as a coenzyme and as the energy source for the reaction. It is essential for DNA replication and repair of damaged DNA. The sequence is that of DNA ligase from Campylobacter concisus (strain 13826).